A 359-amino-acid polypeptide reads, in one-letter code: Splicing factor 3B subunit 4 (359 aa).

2 consecutive RRM domains span residues 13–91 (ACLL…KENK) and 98–176 (ANLF…YARK). Disordered regions lie at residues 198-239 (GYLN…PIVT) and 293-337 (QQQQ…PFNP). Composition is skewed to low complexity over residues 202-231 (QQQQ…QQSQ) and 293-302 (QQQQQQQQQQ). The span at 303 to 312 (HHPHHQHPIP) shows a compositional bias: basic residues.

Belongs to the SF3B4 family. Component of splicing factor SF3B which is composed of at least eight subunits.

It is found in the nucleus. Functionally, subunit of the splicing factor SF3B required for 'A' complex assembly formed by the stable binding of U2 snRNP to the branchpoint sequence (BPS) in pre-mRNA. Sequence independent binding of SF3A/SF3B complex upstream of the branch site is essential, it may anchor U2 snRNP to the pre-mRNA. May also be involved in the assembly of the 'E' complex. Has been found in complex 'B' and 'C' as well. This chain is Splicing factor 3B subunit 4 (sf3b4), found in Dictyostelium discoideum (Social amoeba).